The following is a 155-amino-acid chain: Aspartate carbamoyltransferase regulatory chain (155 aa).

Zn(2+)-binding residues include Cys-110, Cys-115, Cys-139, and Cys-142.

Belongs to the PyrI family. Contains catalytic and regulatory chains. Zn(2+) is required as a cofactor.

Involved in allosteric regulation of aspartate carbamoyltransferase. The chain is Aspartate carbamoyltransferase regulatory chain from Yersinia pestis bv. Antiqua (strain Antiqua).